Consider the following 528-residue polypeptide: Bifunctional pantoate ligase/cytidylate kinase (528 aa).

A pantoate--beta-alanine ligase region spans residues 1 to 293; the sequence is MRLFTTIAGL…IGSCRLIDNI (293 aa). 34 to 41 provides a ligand contact to ATP; that stretch reads MGALHKGH. Histidine 41 acts as the Proton donor in catalysis. Glutamine 65 is a (R)-pantoate binding site. Glutamine 65 contributes to the beta-alanine binding site. ATP is bound at residue 160 to 163; sequence GQKD. Residue glutamine 166 coordinates (R)-pantoate. ATP-binding positions include isoleucine 189 and 197-200; that span reads ISSR. Residues 294–528 form a cytidylate kinase region; that stretch reads LLRNRKPIIA…YGKSSVNNII (235 aa).

In the N-terminal section; belongs to the pantothenate synthetase family. This sequence in the C-terminal section; belongs to the cytidylate kinase family. Type 1 subfamily.

It is found in the cytoplasm. It carries out the reaction (R)-pantoate + beta-alanine + ATP = (R)-pantothenate + AMP + diphosphate + H(+). The enzyme catalyses CMP + ATP = CDP + ADP. The catalysed reaction is dCMP + ATP = dCDP + ADP. It participates in cofactor biosynthesis; (R)-pantothenate biosynthesis; (R)-pantothenate from (R)-pantoate and beta-alanine: step 1/1. Catalyzes the condensation of pantoate with beta-alanine in an ATP-dependent reaction via a pantoyl-adenylate intermediate. In terms of biological role, catalyzes the transfer of a phosphate group from ATP to either CMP or dCMP to form CDP or dCDP and ADP, respectively. The chain is Bifunctional pantoate ligase/cytidylate kinase from Trichodesmium erythraeum (strain IMS101).